The sequence spans 468 residues: ATP synthase subunit beta 3 (468 aa).

ATP is bound at residue 155 to 162 (GGAGVGKT).

This sequence belongs to the ATPase alpha/beta chains family. As to quaternary structure, F-type ATPases have 2 components, CF(1) - the catalytic core - and CF(0) - the membrane proton channel. CF(1) has five subunits: alpha(3), beta(3), gamma(1), delta(1), epsilon(1). CF(0) has three main subunits: a(1), b(2) and c(9-12). The alpha and beta chains form an alternating ring which encloses part of the gamma chain. CF(1) is attached to CF(0) by a central stalk formed by the gamma and epsilon chains, while a peripheral stalk is formed by the delta and b chains.

It localises to the cell inner membrane. It carries out the reaction ATP + H2O + 4 H(+)(in) = ADP + phosphate + 5 H(+)(out). Produces ATP from ADP in the presence of a proton gradient across the membrane. The catalytic sites are hosted primarily by the beta subunits. This chain is ATP synthase subunit beta 3, found in Syntrophotalea carbinolica (strain DSM 2380 / NBRC 103641 / GraBd1) (Pelobacter carbinolicus).